The chain runs to 71 residues: DNA-directed RNA polymerase subunit omega (71 aa).

It belongs to the RNA polymerase subunit omega family. In terms of assembly, the RNAP catalytic core consists of 2 alpha, 1 beta, 1 beta' and 1 omega subunit. When a sigma factor is associated with the core the holoenzyme is formed, which can initiate transcription.

The enzyme catalyses RNA(n) + a ribonucleoside 5'-triphosphate = RNA(n+1) + diphosphate. Its function is as follows. Promotes RNA polymerase assembly. Latches the N- and C-terminal regions of the beta' subunit thereby facilitating its interaction with the beta and alpha subunits. The chain is DNA-directed RNA polymerase subunit omega from Levilactobacillus brevis (strain ATCC 367 / BCRC 12310 / CIP 105137 / JCM 1170 / LMG 11437 / NCIMB 947 / NCTC 947) (Lactobacillus brevis).